A 143-amino-acid polypeptide reads, in one-letter code: MRFSQDDEVLIKEAWGLLHQIPNAGGEALARMFSCYPGTKSYFPHFGHDFSANNEKVKHHGKKVVDAIGQGVQHLHDLSSCLHTLSEKHARELMVDPCNFQYLIEAIMTTIAAHYGEKFTPEINCAAEKCLGQIVHVLISLYR.

In terms of domain architecture, Globin spans 2 to 143; that stretch reads RFSQDDEVLI…IVHVLISLYR (142 aa). His60 serves as a coordination point for O2. Residue His89 coordinates heme b.

This sequence belongs to the globin family. In terms of assembly, heterotetramer of two alpha chains and two beta chains. Red blood cells.

Involved in oxygen transport from the lung to the various peripheral tissues. This Lepidosiren paradoxus (South American lungfish) protein is Hemoglobin subunit alpha (HBA).